Consider the following 129-residue polypeptide: MSHIPSELKYATSHEWIRVEANGEAVVGITEHAQELLGDMVFVDLPEVGKQVGAGDDCAVAESVKAASDIYSPVSGEILAVNEELEGSPELVNSDPYGAGWLFRIKLDDAGELANLLDAEGYQNVVDEE.

The 83-residue stretch at 24 to 106 folds into the Lipoyl-binding domain; the sequence is EAVVGITEHA…YGAGWLFRIK (83 aa). Lys-65 carries the N6-lipoyllysine modification.

This sequence belongs to the GcvH family. The glycine cleavage system is composed of four proteins: P, T, L and H. The cofactor is (R)-lipoate.

Its function is as follows. The glycine cleavage system catalyzes the degradation of glycine. The H protein shuttles the methylamine group of glycine from the P protein to the T protein. In Aeromonas hydrophila subsp. hydrophila (strain ATCC 7966 / DSM 30187 / BCRC 13018 / CCUG 14551 / JCM 1027 / KCTC 2358 / NCIMB 9240 / NCTC 8049), this protein is Glycine cleavage system H protein.